We begin with the raw amino-acid sequence, 327 residues long: ATP-dependent (S)-NAD(P)H-hydrate dehydratase (327 aa).

A YjeF C-terminal domain is found at 11-313 (LLTRVKRIIP…RHVGKAYNAL (303 aa)). Residues glycine 121 and 174–180 (NVIEFKR) contribute to the (6S)-NADPHX site. Residues 209 to 213 (KGQSD) and 228 to 237 (GGLKRCGGQG) contribute to the ATP site. Residue aspartate 238 coordinates (6S)-NADPHX.

It belongs to the NnrD/CARKD family. The cofactor is Mg(2+).

Its subcellular location is the cytoplasm. It carries out the reaction (6S)-NADHX + ATP = ADP + phosphate + NADH + H(+). The enzyme catalyses (6S)-NADPHX + ATP = ADP + phosphate + NADPH + H(+). Functionally, catalyzes the dehydration of the S-form of NAD(P)HX at the expense of ATP, which is converted to ADP. Together with NAD(P)HX epimerase, which catalyzes the epimerization of the S- and R-forms, the enzyme allows the repair of both epimers of NAD(P)HX, a damaged form of NAD(P)H that is a result of enzymatic or heat-dependent hydration. This chain is ATP-dependent (S)-NAD(P)H-hydrate dehydratase, found in Schizosaccharomyces pombe (strain 972 / ATCC 24843) (Fission yeast).